The following is a 642-amino-acid chain: 4-hydroxy-3-methylbut-2-enyl diphosphate reductase (642 aa).

Residues 1–282 (MRKVMLAEKA…EEAISKMSEN (282 aa)) form a 4-hydroxy-3-methylbut-2-enyl diphosphate reductase region. Cys-13 lines the [4Fe-4S] cluster pocket. The (2E)-4-hydroxy-3-methylbut-2-enyl diphosphate site is built by His-42 and His-77. Residues His-42 and His-77 each contribute to the dimethylallyl diphosphate site. 2 residues coordinate isopentenyl diphosphate: His-42 and His-77. Cys-99 contributes to the [4Fe-4S] cluster binding site. His-127 lines the (2E)-4-hydroxy-3-methylbut-2-enyl diphosphate pocket. His-127 contacts dimethylallyl diphosphate. His-127 lines the isopentenyl diphosphate pocket. The active-site Proton donor is the Glu-129. Thr-165 contributes to the (2E)-4-hydroxy-3-methylbut-2-enyl diphosphate binding site. Cys-193 contributes to the [4Fe-4S] cluster binding site. Residues Ser-221, Ser-222, Asn-223, and Ser-266 each contribute to the (2E)-4-hydroxy-3-methylbut-2-enyl diphosphate site. Dimethylallyl diphosphate is bound by residues Ser-221, Ser-222, Asn-223, and Ser-266. Isopentenyl diphosphate is bound by residues Ser-221, Ser-222, Asn-223, and Ser-266. S1 motif domains are found at residues 309 to 377 (GASV…LSVK), 484 to 552 (GQVV…LSVK), and 569 to 638 (GSVV…LSIR).

This sequence in the N-terminal section; belongs to the IspH family. It depends on [4Fe-4S] cluster as a cofactor.

It carries out the reaction isopentenyl diphosphate + 2 oxidized [2Fe-2S]-[ferredoxin] + H2O = (2E)-4-hydroxy-3-methylbut-2-enyl diphosphate + 2 reduced [2Fe-2S]-[ferredoxin] + 2 H(+). It catalyses the reaction dimethylallyl diphosphate + 2 oxidized [2Fe-2S]-[ferredoxin] + H2O = (2E)-4-hydroxy-3-methylbut-2-enyl diphosphate + 2 reduced [2Fe-2S]-[ferredoxin] + 2 H(+). The protein operates within isoprenoid biosynthesis; dimethylallyl diphosphate biosynthesis; dimethylallyl diphosphate from (2E)-4-hydroxy-3-methylbutenyl diphosphate: step 1/1. It participates in isoprenoid biosynthesis; isopentenyl diphosphate biosynthesis via DXP pathway; isopentenyl diphosphate from 1-deoxy-D-xylulose 5-phosphate: step 6/6. Its function is as follows. Catalyzes the conversion of 1-hydroxy-2-methyl-2-(E)-butenyl 4-diphosphate (HMBPP) into a mixture of isopentenyl diphosphate (IPP) and dimethylallyl diphosphate (DMAPP). Acts in the terminal step of the DOXP/MEP pathway for isoprenoid precursor biosynthesis. In Clostridium acetobutylicum (strain ATCC 824 / DSM 792 / JCM 1419 / IAM 19013 / LMG 5710 / NBRC 13948 / NRRL B-527 / VKM B-1787 / 2291 / W), this protein is 4-hydroxy-3-methylbut-2-enyl diphosphate reductase.